The following is a 186-amino-acid chain: Trafficking protein particle complex subunit 5 (186 aa).

It belongs to the TRAPP small subunits family. BET3 subfamily. In terms of assembly, part of the multisubunit TRAPP (transport protein particle) complex.

It localises to the golgi apparatus. The protein resides in the cis-Golgi network. The protein localises to the endoplasmic reticulum. Its function is as follows. May play a role in vesicular transport from endoplasmic reticulum to Golgi. This Dictyostelium discoideum (Social amoeba) protein is Trafficking protein particle complex subunit 5 (trappc5).